A 476-amino-acid polypeptide reads, in one-letter code: Serine--tRNA ligase (476 aa).

279 to 281 (TAE) serves as a coordination point for L-serine. 310 to 312 (RAE) provides a ligand contact to ATP. Residue E333 participates in L-serine binding. 400–403 (EISS) contacts ATP. L-serine is bound at residue S435.

Belongs to the class-II aminoacyl-tRNA synthetase family. Type-1 seryl-tRNA synthetase subfamily. In terms of assembly, homodimer. The tRNA molecule binds across the dimer.

It localises to the cytoplasm. The catalysed reaction is tRNA(Ser) + L-serine + ATP = L-seryl-tRNA(Ser) + AMP + diphosphate + H(+). It carries out the reaction tRNA(Sec) + L-serine + ATP = L-seryl-tRNA(Sec) + AMP + diphosphate + H(+). It participates in aminoacyl-tRNA biosynthesis; selenocysteinyl-tRNA(Sec) biosynthesis; L-seryl-tRNA(Sec) from L-serine and tRNA(Sec): step 1/1. Its function is as follows. Catalyzes the attachment of serine to tRNA(Ser). Is also able to aminoacylate tRNA(Sec) with serine, to form the misacylated tRNA L-seryl-tRNA(Sec), which will be further converted into selenocysteinyl-tRNA(Sec). This is Serine--tRNA ligase from Rhodopseudomonas palustris (strain BisA53).